Here is a 237-residue protein sequence, read N- to C-terminus: Glucosamine-6-phosphate deaminase (237 aa).

Asp-67 functions as the Proton acceptor; for enolization step in the catalytic mechanism. Asn-136 functions as the For ring-opening step in the catalytic mechanism. The Proton acceptor; for ring-opening step role is filled by His-138. Residue Glu-143 is the For ring-opening step of the active site.

It belongs to the glucosamine/galactosamine-6-phosphate isomerase family. NagB subfamily.

It catalyses the reaction alpha-D-glucosamine 6-phosphate + H2O = beta-D-fructose 6-phosphate + NH4(+). The protein operates within amino-sugar metabolism; N-acetylneuraminate degradation; D-fructose 6-phosphate from N-acetylneuraminate: step 5/5. Its function is as follows. Catalyzes the reversible isomerization-deamination of glucosamine 6-phosphate (GlcN6P) to form fructose 6-phosphate (Fru6P) and ammonium ion. In Lysinibacillus sphaericus (strain C3-41), this protein is Glucosamine-6-phosphate deaminase.